We begin with the raw amino-acid sequence, 78 residues long: Longicornsin (78 aa).

The N-terminal stretch at 1–22 (MAESTTTCFLLLVTGYVTAVMS) is a signal peptide. Positions 23-29 (EEAHLRS) are excised as a propeptide. 3 disulfide bridges follow: C35–C58, C43–C63, and C47–C65.

In terms of tissue distribution, salivary glands (at protein level).

It is found in the secreted. Functionally, has antibacterial activity against the Gram-positive bacteria S.aureus ATCC2592 (MIC=0.8 ug/ml), S.aureus 6A (MIC=0.8 ug/ml) and S.aureus 15A (MIC=1.6 ug/ml), and against the Gram-negative bacteria E.coli ATCC 25922 (MIC=3.2 ug/ml), E.coli 23A (MIC=6.4 ug/ml), E.coli 27A (MIC=6.4 ug/ml), P.aeruginosa 3A (MIC=3.2 ug/ml), P.aeruginosa 7A (MIC=0.8 ug/ml) and H.pylori NCTC11637 (MIC=6.4 ug/ml). Has antifungal activity against C.albidus ATCC2002 (MIC=25.6 ug/ml). Very low hemolytic activity against rabbit erythrocytes. The chain is Longicornsin from Haemaphysalis longicornis (Bush tick).